Consider the following 252-residue polypeptide: 5'-methylthioadenosine/S-adenosylhomocysteine nucleosidase (252 aa).

Catalysis depends on E20, which acts as the Proton acceptor. Substrate contacts are provided by residues G86, I160, and 181–182; that span reads ME. The active-site Proton donor is D205.

The protein belongs to the PNP/UDP phosphorylase family. MtnN subfamily. In terms of assembly, homodimer.

It carries out the reaction S-adenosyl-L-homocysteine + H2O = S-(5-deoxy-D-ribos-5-yl)-L-homocysteine + adenine. The catalysed reaction is S-methyl-5'-thioadenosine + H2O = 5-(methylsulfanyl)-D-ribose + adenine. It catalyses the reaction 5'-deoxyadenosine + H2O = 5-deoxy-D-ribose + adenine. Its pathway is amino-acid biosynthesis; L-methionine biosynthesis via salvage pathway; S-methyl-5-thio-alpha-D-ribose 1-phosphate from S-methyl-5'-thioadenosine (hydrolase route): step 1/2. Its function is as follows. Catalyzes the irreversible cleavage of the glycosidic bond in both 5'-methylthioadenosine (MTA) and S-adenosylhomocysteine (SAH/AdoHcy) to adenine and the corresponding thioribose, 5'-methylthioribose and S-ribosylhomocysteine, respectively. Also cleaves 5'-deoxyadenosine, a toxic by-product of radical S-adenosylmethionine (SAM) enzymes, into 5-deoxyribose and adenine. Thus, is required for in vivo function of the radical SAM enzymes biotin synthase and lipoic acid synthase, that are inhibited by 5'-deoxyadenosine accumulation. This chain is 5'-methylthioadenosine/S-adenosylhomocysteine nucleosidase, found in Buchnera aphidicola subsp. Baizongia pistaciae (strain Bp).